Here is a 213-residue protein sequence, read N- to C-terminus: 3-hexulose-6-phosphate synthase 2 (213 aa).

The protein belongs to the HPS/KGPDC family. HPS subfamily.

It catalyses the reaction D-ribulose 5-phosphate + formaldehyde = D-arabino-hex-3-ulose 6-phosphate. The protein operates within one-carbon metabolism; formaldehyde assimilation via RuMP pathway; D-fructose 6-phosphate from D-ribulose 5-phosphate and formaldehyde: step 1/2. In terms of biological role, catalyzes the condensation of ribulose 5-phosphate with formaldehyde to form 3-hexulose 6-phosphate. This chain is 3-hexulose-6-phosphate synthase 2, found in Staphylococcus saprophyticus subsp. saprophyticus (strain ATCC 15305 / DSM 20229 / NCIMB 8711 / NCTC 7292 / S-41).